A 387-amino-acid chain; its full sequence is G2/mitotic-specific cyclin-B2 (387 aa).

It belongs to the cyclin family. Cyclin AB subfamily. In terms of assembly, interacts with the CDK1 protein kinase to form a serine/threonine kinase holoenzyme complex also known as maturation promoting factor (MPF). The cyclin subunit imparts substrate specificity to the complex.

In terms of biological role, essential for the control of the cell cycle at the G2/M (mitosis) transition. This is G2/mitotic-specific cyclin-B2 (ccnb2) from Oryzias latipes (Japanese rice fish).